Reading from the N-terminus, the 599-residue chain is Exocyst complex component EXO70B2 (599 aa).

Residues 38 to 58 (GASGNRGGDPRPTPSRGGSNV) are disordered.

It belongs to the EXO70 family. In terms of assembly, self interacts. Interacts with EXO70B1. Interacts with the exocyst subunits EXO70H1, SEC5A and SEC15B. Binds to SNAP33. Subunit of the exocyst complex that mediates vesicle tethering during exocytosis. Binds to PUB22. Target of the E3 ubiquitin-protein ligase PUB22 that mediates its ubiquitination and degradation via the 26S proteasome to attenuate pathogen-associated molecular patterns (PAMP)-induced signaling, especially is response to the bacterial elicitor flg22. In terms of tissue distribution, mostly expressed in leaves and, to a lower extent, in roots, cotyledons, internodes, flower buds, siliques and anthers.

The protein localises to the cytoplasmic vesicle. Its subcellular location is the phagosome. It localises to the cytoplasm. The protein resides in the nucleus. Functionally, component of an exocyst subcomplex specifically involved in autophagy-related, Golgi-independent membrane traffic to the vacuole. Regulates autophagosome formation and autophagy-related Golgi-independent import into the vacuole. Positive regulator of defense responses to pathogenic bacteria (e.g. P.syringae pv. maculicola), to the biotrophic oomycete H.arabidopsidis and to fungi (e.g. B.graminis hordei), especially in cell wall apposition formation related to plant defense. Required for both immediate and later responses triggered by pathogen-associated molecular patterns (PAMPs). Positive regulator of abscisic acid (ABA)-independent mannitol (drought)-promoted stomatal closure. The sequence is that of Exocyst complex component EXO70B2 from Arabidopsis thaliana (Mouse-ear cress).